A 129-amino-acid chain; its full sequence is Fluoride-specific ion channel FluC 2 (129 aa).

4 helical membrane passes run leucine 4–glycine 24, threonine 39–valine 59, tyrosine 65–serine 85, and glycine 100–leucine 120. Na(+) contacts are provided by glycine 79 and threonine 82.

It belongs to the fluoride channel Fluc/FEX (TC 1.A.43) family.

It is found in the cell inner membrane. The catalysed reaction is fluoride(in) = fluoride(out). With respect to regulation, na(+) is not transported, but it plays an essential structural role and its presence is essential for fluoride channel function. Fluoride-specific ion channel. Important for reducing fluoride concentration in the cell, thus reducing its toxicity. The sequence is that of Fluoride-specific ion channel FluC 2 from Brucella suis biovar 1 (strain 1330).